The chain runs to 116 residues: Large ribosomal subunit protein bL19 (116 aa).

It belongs to the bacterial ribosomal protein bL19 family.

Its function is as follows. This protein is located at the 30S-50S ribosomal subunit interface and may play a role in the structure and function of the aminoacyl-tRNA binding site. The protein is Large ribosomal subunit protein bL19 of Mannheimia succiniciproducens (strain KCTC 0769BP / MBEL55E).